The chain runs to 358 residues: Peptide chain release factor 1 (358 aa).

Q233 carries the N5-methylglutamine modification. The segment covering 282–306 (QRAASERSADRRGQVGSGDRSERVR) has biased composition (basic and acidic residues). The segment at 282-308 (QRAASERSADRRGQVGSGDRSERVRTY) is disordered.

This sequence belongs to the prokaryotic/mitochondrial release factor family. Post-translationally, methylated by PrmC. Methylation increases the termination efficiency of RF1.

The protein resides in the cytoplasm. In terms of biological role, peptide chain release factor 1 directs the termination of translation in response to the peptide chain termination codons UAG and UAA. The sequence is that of Peptide chain release factor 1 from Afipia carboxidovorans (strain ATCC 49405 / DSM 1227 / KCTC 32145 / OM5) (Oligotropha carboxidovorans).